Reading from the N-terminus, the 384-residue chain is UDP-4-amino-4-deoxy-L-arabinose--oxoglutarate aminotransferase (384 aa).

An N6-(pyridoxal phosphate)lysine modification is found at Lys-182.

It belongs to the DegT/DnrJ/EryC1 family. ArnB subfamily. Homodimer. It depends on pyridoxal 5'-phosphate as a cofactor.

It carries out the reaction UDP-4-amino-4-deoxy-beta-L-arabinose + 2-oxoglutarate = UDP-beta-L-threo-pentopyranos-4-ulose + L-glutamate. The protein operates within nucleotide-sugar biosynthesis; UDP-4-deoxy-4-formamido-beta-L-arabinose biosynthesis; UDP-4-deoxy-4-formamido-beta-L-arabinose from UDP-alpha-D-glucuronate: step 2/3. It participates in bacterial outer membrane biogenesis; lipopolysaccharide biosynthesis. Functionally, catalyzes the conversion of UDP-4-keto-arabinose (UDP-Ara4O) to UDP-4-amino-4-deoxy-L-arabinose (UDP-L-Ara4N). The modified arabinose is attached to lipid A and is required for resistance to polymyxin and cationic antimicrobial peptides. In Yersinia pseudotuberculosis serotype O:1b (strain IP 31758), this protein is UDP-4-amino-4-deoxy-L-arabinose--oxoglutarate aminotransferase.